Reading from the N-terminus, the 438-residue chain is Gamma-glutamyl phosphate reductase (438 aa).

The protein belongs to the gamma-glutamyl phosphate reductase family.

The protein localises to the cytoplasm. It carries out the reaction L-glutamate 5-semialdehyde + phosphate + NADP(+) = L-glutamyl 5-phosphate + NADPH + H(+). It functions in the pathway amino-acid biosynthesis; L-proline biosynthesis; L-glutamate 5-semialdehyde from L-glutamate: step 2/2. Its function is as follows. Catalyzes the NADPH-dependent reduction of L-glutamate 5-phosphate into L-glutamate 5-semialdehyde and phosphate. The product spontaneously undergoes cyclization to form 1-pyrroline-5-carboxylate. In Prochlorococcus marinus (strain NATL1A), this protein is Gamma-glutamyl phosphate reductase.